A 328-amino-acid chain; its full sequence is Malate dehydrogenase (328 aa).

12–18 (GAAGQIG) contacts NAD(+). Residues Arg-95 and Arg-101 each contribute to the substrate site. NAD(+) contacts are provided by residues Asn-108, Gln-115, and 132-134 (VGN). Substrate is bound by residues Asn-134 and Arg-165. The Proton acceptor role is filled by His-190.

This sequence belongs to the LDH/MDH superfamily. MDH type 2 family.

It carries out the reaction (S)-malate + NAD(+) = oxaloacetate + NADH + H(+). Functionally, catalyzes the reversible oxidation of malate to oxaloacetate. The protein is Malate dehydrogenase of Variovorax paradoxus (strain S110).